Reading from the N-terminus, the 350-residue chain is Hydroxymethylglutaryl-CoA synthase (350 aa).

The active-site Proton donor/acceptor is the glutamate 83. Residue cysteine 115 is the Acyl-thioester intermediate of the active site. Cysteine 115 and threonine 156 together coordinate (3S)-3-hydroxy-3-methylglutaryl-CoA. A CoA-binding site is contributed by arginine 204. Positions 206 and 239 each coordinate (3S)-3-hydroxy-3-methylglutaryl-CoA. The Proton donor/acceptor role is filled by histidine 239. Lysine 244 serves as a coordination point for CoA. Residues asparagine 271 and serine 301 each coordinate (3S)-3-hydroxy-3-methylglutaryl-CoA.

Belongs to the thiolase-like superfamily. Archaeal HMG-CoA synthase family. In terms of assembly, interacts with acetoacetyl-CoA thiolase that catalyzes the precedent step in the pathway and with a DUF35 protein. The acetoacetyl-CoA thiolase/HMG-CoA synthase complex channels the intermediate via a fused CoA-binding site, which allows for efficient coupling of the endergonic thiolase reaction with the exergonic HMGCS reaction.

The enzyme catalyses acetoacetyl-CoA + acetyl-CoA + H2O = (3S)-3-hydroxy-3-methylglutaryl-CoA + CoA + H(+). The protein operates within metabolic intermediate biosynthesis; (R)-mevalonate biosynthesis; (R)-mevalonate from acetyl-CoA: step 2/3. Catalyzes the condensation of acetyl-CoA with acetoacetyl-CoA to form 3-hydroxy-3-methylglutaryl-CoA (HMG-CoA). Functions in the mevalonate (MVA) pathway leading to isopentenyl diphosphate (IPP), a key precursor for the biosynthesis of isoprenoid compounds that are building blocks of archaeal membrane lipids. In Thermococcus sibiricus (strain DSM 12597 / MM 739), this protein is Hydroxymethylglutaryl-CoA synthase.